The primary structure comprises 399 residues: ATP phosphoribosyltransferase regulatory subunit (399 aa).

It belongs to the class-II aminoacyl-tRNA synthetase family. HisZ subfamily. As to quaternary structure, heteromultimer composed of HisG and HisZ subunits.

It is found in the cytoplasm. It participates in amino-acid biosynthesis; L-histidine biosynthesis; L-histidine from 5-phospho-alpha-D-ribose 1-diphosphate: step 1/9. Functionally, required for the first step of histidine biosynthesis. May allow the feedback regulation of ATP phosphoribosyltransferase activity by histidine. This is ATP phosphoribosyltransferase regulatory subunit from Symbiobacterium thermophilum (strain DSM 24528 / JCM 14929 / IAM 14863 / T).